An 84-amino-acid chain; its full sequence is DNA-directed RNA polymerase subunit Rpo5 (84 aa).

Belongs to the archaeal Rpo5/eukaryotic RPB5 RNA polymerase subunit family. In terms of assembly, part of the RNA polymerase complex.

Its subcellular location is the cytoplasm. It carries out the reaction RNA(n) + a ribonucleoside 5'-triphosphate = RNA(n+1) + diphosphate. In terms of biological role, DNA-dependent RNA polymerase (RNAP) catalyzes the transcription of DNA into RNA using the four ribonucleoside triphosphates as substrates. This Sulfurisphaera tokodaii (strain DSM 16993 / JCM 10545 / NBRC 100140 / 7) (Sulfolobus tokodaii) protein is DNA-directed RNA polymerase subunit Rpo5.